The sequence spans 53 residues: EVKYDPCFGHKIDRINHVSNLGCPSLRDPRPTAPAALRIIRDLHPDSKQSQAA.

An intrachain disulfide couples Cys-7 to Cys-23. The propeptide occupies 39–53 (IIRDLHPDSKQSQAA).

This sequence belongs to the natriuretic peptide family. As to expression, expressed by the venom gland.

It localises to the secreted. Its function is as follows. Exhibits vasodilator, natriuretic and diuretic properties in animal models and human tissues. Acts by stimulating cGMP via the natriuretic peptide receptor 1 (NPR1). Is a poor agonist of the atrial natriuretic peptide receptor 2 (NPR2). Is not degraded by neutral endopeptidase (NEP/MME). Binds to atrial natriuretic peptide clearance receptor (NPR-C/NPR3), which may be responsible of the removal of DNP from the circulation. Increases calcium uptake and induces histamine release from rat peritoneal mast cells. Increases calcium-activated potassium (KCa) current in gastric antral circular smooth muscle cells by increasing cGMP production and activating inositol trisphosphate receptors (IP3Rs). In vivo, reduces both systolic and diastolic blood pressure with no effect on heart rate, when intravenously injected in conscious rabbits. In Dendroaspis angusticeps (Eastern green mamba), this protein is Natriuretic peptide DNP-2.